Reading from the N-terminus, the 332-residue chain is Large ribosomal subunit protein mL44 (332 aa).

The transit peptide at 1-30 directs the protein to the mitochondrion; it reads MASGLVRLLQQGPRCLLAPVAPKLVPPVRG. An RNase III domain is found at 86 to 228; the sequence is DLLKTAFVNS…LITQMTGKEL (143 aa). The DRBM domain maps to 236 to 306; sequence NPMGLLVEEL…ARVALRKLYG (71 aa).

This sequence belongs to the ribonuclease III family. Mitochondrion-specific ribosomal protein mL44 subfamily. In terms of assembly, component of the mitochondrial ribosome large subunit (39S) which comprises a 16S rRNA and about 50 distinct proteins.

Its subcellular location is the mitochondrion. Its function is as follows. Component of the 39S subunit of mitochondrial ribosome. May have a function in the assembly/stability of nascent mitochondrial polypeptides exiting the ribosome. The sequence is that of Large ribosomal subunit protein mL44 (MRPL44) from Pongo abelii (Sumatran orangutan).